Consider the following 381-residue polypeptide: Dual-specificity RNA methyltransferase RlmN (381 aa).

Glu-86 functions as the Proton acceptor in the catalytic mechanism. Positions 105–338 constitute a Radical SAM core domain; that stretch reads RHARYTICVS…CTIRQSKGLD (234 aa). A disulfide bridge connects residues Cys-112 and Cys-343. Positions 119, 123, and 126 each coordinate [4Fe-4S] cluster. S-adenosyl-L-methionine-binding positions include 169–170, Ser-201, 224–226, and Asn-300; these read GE and SLH. The active-site S-methylcysteine intermediate is the Cys-343. Positions 351 to 381 are disordered; sequence ENPKFRANVSGNSAAKTEEKPTNDKTNVSKK.

This sequence belongs to the radical SAM superfamily. RlmN family. Requires [4Fe-4S] cluster as cofactor.

It is found in the cytoplasm. The catalysed reaction is adenosine(2503) in 23S rRNA + 2 reduced [2Fe-2S]-[ferredoxin] + 2 S-adenosyl-L-methionine = 2-methyladenosine(2503) in 23S rRNA + 5'-deoxyadenosine + L-methionine + 2 oxidized [2Fe-2S]-[ferredoxin] + S-adenosyl-L-homocysteine. It carries out the reaction adenosine(37) in tRNA + 2 reduced [2Fe-2S]-[ferredoxin] + 2 S-adenosyl-L-methionine = 2-methyladenosine(37) in tRNA + 5'-deoxyadenosine + L-methionine + 2 oxidized [2Fe-2S]-[ferredoxin] + S-adenosyl-L-homocysteine. Specifically methylates position 2 of adenine 2503 in 23S rRNA and position 2 of adenine 37 in tRNAs. m2A2503 modification seems to play a crucial role in the proofreading step occurring at the peptidyl transferase center and thus would serve to optimize ribosomal fidelity. The polypeptide is Dual-specificity RNA methyltransferase RlmN (Campylobacter concisus (strain 13826)).